Here is a 65-residue protein sequence, read N- to C-terminus: Large ribosomal subunit protein bL35 (65 aa).

The protein belongs to the bacterial ribosomal protein bL35 family.

The chain is Large ribosomal subunit protein bL35 from Synechococcus sp. (strain WH7803).